Here is a 201-residue protein sequence, read N- to C-terminus: Small ribosomal subunit protein uS4c (201 aa).

An S4 RNA-binding domain is found at 91 to 151 (MRLDNIIFQL…TKNPEELRTI (61 aa)).

Belongs to the universal ribosomal protein uS4 family. As to quaternary structure, part of the 30S ribosomal subunit. Contacts protein S5. The interaction surface between S4 and S5 is involved in control of translational fidelity.

It is found in the plastid. Its subcellular location is the chloroplast. One of the primary rRNA binding proteins, it binds directly to 16S rRNA where it nucleates assembly of the body of the 30S subunit. Functionally, with S5 and S12 plays an important role in translational accuracy. The protein is Small ribosomal subunit protein uS4c (rps4) of Welwitschia mirabilis (Tree tumbo).